The chain runs to 661 residues: Ecdysteroid-phosphate phosphatase (661 aa).

The UBA domain maps to 16–57 (KQDVSPLQILLQMGFRRQRALKALAATGNRSVQLASDWLLTH). The region spanning 235–300 (ANHQVYKVTQ…PAVYTRRTAE (66 aa)) is the SH3 domain. The active site involves Arg409. The Tele-phosphohistidine intermediate role is filled by His410. The active site involves His590.

In terms of assembly, homodimer. Detected in non-diapause eggs, with highest expression between 2 and 5 days after oviposition. Not detected in other tissues tested.

The protein localises to the cytoplasm. The protein resides in the cytosol. It catalyses the reaction ecdysone 22-phosphate + H2O = ecdysone + phosphate. It carries out the reaction 20-hydroxyecdysone 22-phosphate + H2O = 20-hydroxyecdysone + phosphate. The catalysed reaction is 2-deoxyecdysone 22-phosphate + H2O = 2-deoxyecdysone + phosphate. The enzyme catalyses O-phospho-L-tyrosyl-[protein] + H2O = L-tyrosyl-[protein] + phosphate. Competitively inhibited by 4-nitrophenyl phosphate (para-nitrophenylphosphate, pNPP). Also inhibited by tungstate, vanadate, and phosphate. Functionally, steroid phosphatase which catalyzes the conversion of inactive phosphorylated ecdysteroids into their active forms. Shows high activity towards ecdysone 22-phosphate (E22P). Has lower activity towards other ecdysteriod phosphates including 20-hydroxyecdysone 22-phosphate (20E22P) and 2-deoxyecdysone 22-phosphate (2dE22P). Also has protein tyrosine phosphatase activity. This is Ecdysteroid-phosphate phosphatase from Bombyx mori (Silk moth).